The chain runs to 241 residues: DNA repair protein RecO (241 aa).

This sequence belongs to the RecO family.

Involved in DNA repair and RecF pathway recombination. The polypeptide is DNA repair protein RecO (Rickettsia bellii (strain OSU 85-389)).